Consider the following 552-residue polypeptide: MSDIAIIVSLLSLVAVLGLWIGHIKIKGVGLGIGGVLFGGIIISHCTHLYGIELDAHTLHFIQEFGLILFVYSIGIQVGPGFFASLRQSGLKLNGFAVMIVGLSGILVALIHKLFDVPLPVILGIFSGAVTNTPSLGAGQQVLTELGGDNITAVMGMSYAIAYPFGIIGILLSMWLIRIIFKVNIDKEAQEFDNNQNQQKEGLDTLNVRLTNPNLGGLKLKEIPDFESHTVIYSRLKRNDQLIVPNVDTVLNVGDVLHLVGEKATLHKMQLILGEEADVSVSTRGTIFRSERAVVTNENVFGKKIRHLMLKGKYEVVISRLNRAGVELIPNGEMALQFGDVLNLVGRQEDIETVRAIIGDAHQKLQQVQMLPIFLGIGLGVLLGSLPLYLPGFPVALKLGLAGGPLVVALILARIGSIGKLYWFMPPSANLALREIGIVLFLSVVGLKAGANFLDTLLSPEGLAWMGYGAIITFIPLIVTGFVARIYGKMNYLSLCGLLSGAMTDPPALAFANEIKDGHGAAALSYATVYPLVMFLRIILPQLLAILLWTAS.

5 helical membrane-spanning segments follow: residues 4–24, 29–49, 65–85, 95–115, and 161–181; these read IAII…IGHI, VGLG…CTHL, FGLI…FFAS, GFAV…HKLF, and IAYP…RIIF. RCK C-terminal domains are found at residues 190 to 275 and 277 to 360; these read QEFD…ILGE and ADVS…IIGD. Transmembrane regions (helical) follow at residues 370 to 390, 403 to 425, 438 to 458, 463 to 483, 492 to 512, and 529 to 549; these read MLPI…PLYL, GGPL…YWFM, IVLF…DTLL, LAWM…TGFV, YLSL…LAFA, and VYPL…ILLW.

Belongs to the AAE transporter (TC 2.A.81) family. YidE subfamily.

It localises to the cell membrane. The protein is Putative transport protein APJL_0985 of Actinobacillus pleuropneumoniae serotype 3 (strain JL03).